Consider the following 253-residue polypeptide: Regulatory protein VirG (253 aa).

A Response regulatory domain is found at 15–129; it reads HVLVIDDDVA…EFLARIRVAL (115 aa). A 4-aspartylphosphate modification is found at Asp-64. Residues 141–241 constitute a DNA-binding region (ompR/PhoB-type); sequence RRSFSFADWT…ARGAGYFFDA (101 aa).

Phosphorylated by wide host range (WHR) VirA protein.

The protein resides in the cytoplasm. Functionally, virG is required for the positive regulation of at least two vir loci encoded by the Ti plasmid of A.tumefaciens. The protein is Regulatory protein VirG (virG) of Agrobacterium fabrum (strain C58 / ATCC 33970) (Agrobacterium tumefaciens (strain C58)).